We begin with the raw amino-acid sequence, 290 residues long: 33 kDa chaperonin (290 aa).

Intrachain disulfides connect C235–C237 and C268–C271.

This sequence belongs to the HSP33 family. In terms of processing, under oxidizing conditions two disulfide bonds are formed involving the reactive cysteines. Under reducing conditions zinc is bound to the reactive cysteines and the protein is inactive.

It is found in the cytoplasm. Functionally, redox regulated molecular chaperone. Protects both thermally unfolding and oxidatively damaged proteins from irreversible aggregation. Plays an important role in the bacterial defense system toward oxidative stress. The polypeptide is 33 kDa chaperonin (Streptococcus pyogenes serotype M2 (strain MGAS10270)).